The sequence spans 329 residues: Ferredoxin--NADP reductase 2 (329 aa).

8 residues coordinate FAD: Thr18, Glu37, Gln45, Tyr50, Val90, Phe124, Asp285, and Ser326.

It belongs to the ferredoxin--NADP reductase type 2 family. In terms of assembly, homodimer. Requires FAD as cofactor.

The catalysed reaction is 2 reduced [2Fe-2S]-[ferredoxin] + NADP(+) + H(+) = 2 oxidized [2Fe-2S]-[ferredoxin] + NADPH. This Bacillus mycoides (strain KBAB4) (Bacillus weihenstephanensis) protein is Ferredoxin--NADP reductase 2.